The chain runs to 205 residues: Protein Nef (205 aa).

Gly2 carries the N-myristoyl glycine; by host lipid modification. Ser6 carries the post-translational modification Phosphoserine; by host. Residues 62 to 65 (EEEE) are acidic; interacts with host PACS1 and PACS2; stabilizes the interaction of NEF/MHC-I with host AP1M1; necessary for MHC-I internalization. The interval 69 to 78 (PVRPQVPVRP) is SH3-binding; interaction with Src family tyrosine kinases. The PxxP; stabilizes the interaction of NEF/MHC-I with host AP1M1; necessary for MHC-I internalization motif lies at 72–75 (PQVP). Residues 108-124 (DTLDLWVYHTQGYFPDW) are mediates dimerization, Nef-PTE1 interaction. Positions 148-180 (VDPEEVEKANEGENNCLLHPMSQHGMEDEDREV) are binding to ATP6V1H. A Dileucine internalization motif; necessary for CD4 internalization motif is present at residues 164–165 (LL). The Diacidic; necessary for CD4 internalization signature appears at 174-175 (ED).

Belongs to the lentivirus primate group Nef protein family. As to quaternary structure, monomer; cytosolic form. Homodimer; membrane bound form. Interacts with Nef associated p21-activated kinase (PAK2); this interaction activates PAK2. Associates with the Nef-MHC-I-AP1 complex; this complex is required for MHC-I internalization. Interacts (via C-terminus) with host PI3-kinase. Interacts with host PACS1; this interaction seems to be weak. Interacts with host PACS2. Interacts with host LCK and MAPK3; these interactions inhibit the kinase activity of the latter. Interacts with host ATP6V1H; this interaction may play a role in CD4 endocytosis. Associates with the CD4-Nef-AP2 complex; this complex is required for CD4 internalization. Interacts with host AP2 subunit alpha and AP2 subunit sigma2. Interacts with TCR-zeta chain; this interaction up-regulates the Fas ligand (FasL) surface expression. Interacts with host HCK, LYN, and SRC; these interactions activate the Src family kinases. Interacts with MAP3K5; this interaction inhibits the Fas and TNFR-mediated death signals. Interacts with beta-COP and PTE1. Interacts with human RACK1; this increases Nef phosphorylation by PKC. Interacts with TP53; this interaction decreases the half-life of TP53, protecting the infected cell against p53-mediated apoptosis. The virion-associated Nef proteins are cleaved by the viral protease to release the soluble C-terminal core protein. Nef is probably cleaved concomitantly with viral structural proteins on maturation of virus particles. Post-translationally, myristoylated. In terms of processing, phosphorylated on serine residues, probably by host PKCdelta and theta.

The protein resides in the host cell membrane. Its subcellular location is the virion. The protein localises to the secreted. It localises to the host Golgi apparatus membrane. Factor of infectivity and pathogenicity, required for optimal virus replication. Alters numerous pathways of T-lymphocyte function and down-regulates immunity surface molecules in order to evade host defense and increase viral infectivity. Alters the functionality of other immunity cells, like dendritic cells, monocytes/macrophages and NK cells. In terms of biological role, in infected CD4(+) T-lymphocytes, down-regulates the surface MHC-I, mature MHC-II, CD4, CD28, CCR5 and CXCR4 molecules. Mediates internalization and degradation of host CD4 through the interaction of with the cytoplasmic tail of CD4, the recruitment of AP-2 (clathrin adapter protein complex 2), internalization through clathrin coated pits, and subsequent transport to endosomes and lysosomes for degradation. Diverts host MHC-I molecules to the trans-Golgi network-associated endosomal compartments by an endocytic pathway to finally target them for degradation. MHC-I down-regulation may involve AP-1 (clathrin adapter protein complex 1) or possibly Src family kinase-ZAP70/Syk-PI3K cascade recruited by PACS2. In consequence infected cells are masked for immune recognition by cytotoxic T-lymphocytes. Decreasing the number of immune receptors also prevents reinfection by more HIV particles (superinfection). Down-regulates host SERINC3 and SERINC5 thereby excluding these proteins from the viral particles. Virion infectivity is drastically higher when SERINC3 or SERINC5 are excluded from the viral envelope, because these host antiviral proteins impair the membrane fusion event necessary for subsequent virion penetration. Its function is as follows. Bypasses host T-cell signaling by inducing a transcriptional program nearly identical to that of anti-CD3 cell activation. Interaction with TCR-zeta chain up-regulates the Fas ligand (FasL). Increasing surface FasL molecules and decreasing surface MHC-I molecules on infected CD4(+) cells send attacking cytotoxic CD8+ T-lymphocytes into apoptosis. Functionally, plays a role in optimizing the host cell environment for viral replication without causing cell death by apoptosis. Protects the infected cells from apoptosis in order to keep them alive until the next virus generation is ready to strike. Inhibits the Fas and TNFR-mediated death signals by blocking MAP3K5/ASK1. Decreases the half-life of TP53, protecting the infected cell against p53-mediated apoptosis. Inhibits the apoptotic signals regulated by the Bcl-2 family proteins through the formation of a Nef/PI3-kinase/PAK2 complex that leads to activation of PAK2 and induces phosphorylation of host BAD. Extracellular Nef protein targets CD4(+) T-lymphocytes for apoptosis by interacting with CXCR4 surface receptors. This Human immunodeficiency virus type 1 group M subtype F1 (isolate VI850) (HIV-1) protein is Protein Nef.